The sequence spans 426 residues: MVVDKIQAIRGMNDILPDSTSVWRFIEQTFINCLVRYGYKEIRFPIVENTQLFKRTIGEITDIVEKEMYTFNDLNGDSITLRPEGTAGCVRACIEHGLLHNQQQKLWYLGPMFRHERPQKGRYRQFNQFGVEALGITGTAIELELISICRRLWTDLGFSQSVQLQVNSLGEINERQKYRSILVEYLRDHFQILDEDSKRRLDKNPLRVLDSKNPDLQQLIQNAPKLIDVLGDDSREHFQSFCNGLETLGIPYSINPVLVRGLDYYGQTVFEWVTDQLGSQATICAGGRYDMLVEFLGGAPTPAVGFALGLERIFLLMETLNLLNESNNKQSIFIIATNEEAILKALVMAESIRNAHPSLDVITNTTGGGFKSQFKKADKSGARLALILGEDEIAREYVSIKDLRTEIEQISIPMTKINEFLQDYLA.

The protein belongs to the class-II aminoacyl-tRNA synthetase family. In terms of assembly, homodimer.

It is found in the cytoplasm. The enzyme catalyses tRNA(His) + L-histidine + ATP = L-histidyl-tRNA(His) + AMP + diphosphate + H(+). The polypeptide is Histidine--tRNA ligase (Legionella pneumophila (strain Lens)).